A 527-amino-acid polypeptide reads, in one-letter code: MQLQKPLKIGLGMMGAGLFGIIFGWVLFPVILKSQLKKEMALSKKTDVRAMWEKIPFALDFKVYMFNYTNVEEIMKGAAPIVKEIGPFHFDEWKEKVDIEDHDEDDTITYKKRDYFYFRPDKSGPGLTGEEVVVMPHLLMLSMATIVNNEKPAMLNMLGKAFNGIFDEPKDIFIRVKVLDLLFRGIIINCARTEFAPKAVCTALKKEGATGMTFEPNNQFRFSLFGMRNGTIDPHVVTVRRGIKNVMDVGKVIAIDGKTEQDVWRDKCNEFEGTDGTVFPPFLTEKDNLESFSDDLCRSFKPWYQKKTSYRGIKTNRYVANIGDFANDPELQCYCDSPDKCPPKGLMDLMKCMKAPMYASLPHYLDSDPQLLKDVKGLSPDANEHGIEIDFEPISGTPMVAKQRVQFNIILLKTDKMDLIKDLPGTMTPLFWIEEGLALNKTFVKMLKNQLFIPKRIVSVVKWLLAGVGFVGLVGSLVYQFKGKMINFALSPSSAQVTKVNPEINQQNQPKDISIIGESQNPPKVDM.

Over 1 to 10 the chain is Cytoplasmic; sequence MQLQKPLKIG. Residues 11 to 31 form a helical membrane-spanning segment; it reads LGMMGAGLFGIIFGWVLFPVI. Residues 32 to 456 lie on the Extracellular side of the membrane; sequence LKSQLKKEMA…LKNQLFIPKR (425 aa). 2 N-linked (GlcNAc...) asparagine glycosylation sites follow: Asn-67 and Asn-229. 3 disulfide bridges follow: Cys-268–Cys-333, Cys-297–Cys-352, and Cys-335–Cys-341. A glycan (N-linked (GlcNAc...) asparagine) is linked at Asn-440. A helical membrane pass occupies residues 457–477; that stretch reads IVSVVKWLLAGVGFVGLVGSL. At 478–527 the chain is on the cytoplasmic side; it reads VYQFKGKMINFALSPSSAQVTKVNPEINQQNQPKDISIIGESQNPPKVDM.

This sequence belongs to the CD36 family. In terms of tissue distribution, detected in both male and female antennal tissues. Expression is two to three fold higher in male compared to female antenna.

It localises to the cell membrane. In terms of biological role, plays an olfactory role that is not restricted to pheromone sensitivity. The sequence is that of Sensory neuron membrane protein 1 from Ostrinia furnacalis (Asian corn borer).